We begin with the raw amino-acid sequence, 132 residues long: DNA-directed RNA polymerase subunit omega (132 aa).

The interval 76–105 is disordered; the sequence is EVDEPEQDAASIAEGQLTSGSQDEDEMPET.

Belongs to the RNA polymerase subunit omega family. In terms of assembly, the RNAP catalytic core consists of 2 alpha, 1 beta, 1 beta' and 1 omega subunit. When a sigma factor is associated with the core the holoenzyme is formed, which can initiate transcription.

The enzyme catalyses RNA(n) + a ribonucleoside 5'-triphosphate = RNA(n+1) + diphosphate. Functionally, promotes RNA polymerase assembly. Latches the N- and C-terminal regions of the beta' subunit thereby facilitating its interaction with the beta and alpha subunits. This chain is DNA-directed RNA polymerase subunit omega, found in Allorhizobium ampelinum (strain ATCC BAA-846 / DSM 112012 / S4) (Agrobacterium vitis (strain S4)).